The chain runs to 355 residues: Alanine racemase (355 aa).

Residue Lys-34 is the Proton acceptor; specific for D-alanine of the active site. Lys-34 carries the post-translational modification N6-(pyridoxal phosphate)lysine. Arg-133 contributes to the substrate binding site. Tyr-249 (proton acceptor; specific for L-alanine) is an active-site residue. Met-297 is a substrate binding site.

The protein belongs to the alanine racemase family. The cofactor is pyridoxal 5'-phosphate.

The enzyme catalyses L-alanine = D-alanine. Its pathway is amino-acid biosynthesis; D-alanine biosynthesis; D-alanine from L-alanine: step 1/1. Its function is as follows. Catalyzes the interconversion of L-alanine and D-alanine. May also act on other amino acids. This chain is Alanine racemase (alr), found in Rickettsia canadensis (strain McKiel).